We begin with the raw amino-acid sequence, 181 residues long: ATP-dependent protease subunit HslV (181 aa).

Residue Thr7 is part of the active site. Ala166, Cys169, and Thr172 together coordinate Na(+).

Belongs to the peptidase T1B family. HslV subfamily. A double ring-shaped homohexamer of HslV is capped on each side by a ring-shaped HslU homohexamer. The assembly of the HslU/HslV complex is dependent on binding of ATP.

It is found in the cytoplasm. The catalysed reaction is ATP-dependent cleavage of peptide bonds with broad specificity.. Its activity is regulated as follows. Allosterically activated by HslU binding. Protease subunit of a proteasome-like degradation complex believed to be a general protein degrading machinery. The chain is ATP-dependent protease subunit HslV from Anaeromyxobacter dehalogenans (strain 2CP-1 / ATCC BAA-258).